The following is a 427-amino-acid chain: Serine hydroxymethyltransferase (427 aa).

120-122 provides a ligand contact to (6S)-5,6,7,8-tetrahydrofolate; it reads GHI. The residue at position 226 (lysine 226) is an N6-(pyridoxal phosphate)lysine.

Belongs to the SHMT family. As to quaternary structure, homodimer. The cofactor is pyridoxal 5'-phosphate.

It is found in the cytoplasm. It functions in the pathway amino-acid biosynthesis; glycine biosynthesis; glycine from L-serine: step 1/1. Its function is as follows. Catalyzes the reversible interconversion of serine and glycine with a modified folate serving as the one-carbon carrier. Also exhibits a pteridine-independent aldolase activity toward beta-hydroxyamino acids, producing glycine and aldehydes, via a retro-aldol mechanism. In Pyrococcus abyssi (strain GE5 / Orsay), this protein is Serine hydroxymethyltransferase.